Consider the following 467-residue polypeptide: UPF0236 protein TTE0610/TTE0881/TTE1053/TTE2432 (467 aa).

This sequence belongs to the UPF0236 family.

The sequence is that of UPF0236 protein TTE0610/TTE0881/TTE1053/TTE2432 from Caldanaerobacter subterraneus subsp. tengcongensis (strain DSM 15242 / JCM 11007 / NBRC 100824 / MB4) (Thermoanaerobacter tengcongensis).